A 143-amino-acid polypeptide reads, in one-letter code: Polyadenylate-binding protein-interacting protein 2 (143 aa).

Positions 11-21 (TLNPNAPVFDP) match the PAM2-like motif.

This chain is Polyadenylate-binding protein-interacting protein 2 (CID2), found in Arabidopsis thaliana (Mouse-ear cress).